The sequence spans 516 residues: Propionyl-CoA carboxylase, carboxyltransferase subunit (516 aa).

The tract at residues 1-32 (MTMEDRIDELREKREEALKGGGEDRIASQHDK) is disordered. The CoA carboxyltransferase N-terminal domain occupies 3–259 (MEDRIDELRE…NNVEDPPRVE (257 aa)). Positions 263-509 (DPERVADELE…KSKRKSQPDK (247 aa)) constitute a CoA carboxyltransferase C-terminal domain.

The protein belongs to the AccD/PCCB family. The propionyl coenzyme A carboxylase (PCC) complex is composed of three subunits: PccA (biotin carboxylase and biotin-carboxyl carrier), PccB (carboxyltransferase) and PccX.

It carries out the reaction propanoyl-CoA + hydrogencarbonate + ATP = (S)-methylmalonyl-CoA + ADP + phosphate + H(+). It functions in the pathway metabolic intermediate metabolism; propanoyl-CoA degradation; succinyl-CoA from propanoyl-CoA: step 1/3. Part of the propionyl coenzyme A carboxylase (PCC) complex involved in propionate utilization and in the production of the poly(3-hydroxybutyrate-co-3-hydroxyvalerate)(PHBV), which is a water-insoluble biopolymer used as intracellular energy reserve material when cells grow under conditions of nutrient limitation. The complex catalyzes the carboxylation of propionyl-CoA to methylmalonyl-CoA. PCC is also able to catalyze the carboxylation of acetyl-CoA. The protein is Propionyl-CoA carboxylase, carboxyltransferase subunit of Haloferax mediterranei (strain ATCC 33500 / DSM 1411 / JCM 8866 / NBRC 14739 / NCIMB 2177 / R-4) (Halobacterium mediterranei).